Consider the following 432-residue polypeptide: Beta-fructosidase (432 aa).

Substrate-binding positions include 14 to 17 (WMND), Gln-33, Trp-41, 74 to 75 (FS), Tyr-92, 137 to 138 (RD), 188 to 190 (EIE), Thr-208, and Trp-260. The active site involves Asp-17.

The protein belongs to the glycosyl hydrolase 32 family.

The catalysed reaction is Hydrolysis of terminal non-reducing beta-D-fructofuranoside residues in beta-D-fructofuranosides.. Its function is as follows. Hydrolysis of sucrose, raffinose, inulin and levan. Specific for the fructose moiety and the beta-anomeric configuration of the glycosidic linkages of its substrates. The enzyme released fructose from sucrose and raffinose, and the fructose polymer inulin is hydrolyzed quantitatively in an exo-type fashion. The polypeptide is Beta-fructosidase (bfrA) (Thermotoga maritima (strain ATCC 43589 / DSM 3109 / JCM 10099 / NBRC 100826 / MSB8)).